Reading from the N-terminus, the 72-residue chain is MSAIFNFQSLLIVILLLICTCAYLRALVPNLLDKNKTGILGIFWKCARIGERKSPYVAVCCVVMAFSILFMQ.

The signal sequence occupies residues 1–26 (MSAIFNFQSLLIVILLLICTCAYLRA). The Extracellular portion of the chain corresponds to 27–53 (LVPNLLDKNKTGILGIFWKCARIGERK). An N-linked (GlcNAc...) asparagine glycan is attached at Asn35. Residues 54-71 (SPYVAVCCVVMAFSILFM) form a helical membrane-spanning segment. A topological domain (cytoplasmic) is located at residue Gln72.

Belongs to the KISH family.

Its subcellular location is the golgi apparatus membrane. Involved in the early part of the secretory pathway. In Xenopus tropicalis (Western clawed frog), this protein is Protein kish-A (tmem167a).